The chain runs to 359 residues: NADH-quinone oxidoreductase subunit H (359 aa).

Helical transmembrane passes span 16–36 (IWPA…CVLL), 94–114 (GLFV…WAVI), 129–149 (LLFL…AGWA), 167–187 (VSYE…SASL), 208–228 (FLSW…ISGL), 261–281 (FFLA…ILFL), 296–316 (IPGW…FLWV), and 331–351 (LGWK…GAWM).

Belongs to the complex I subunit 1 family. As to quaternary structure, NDH-1 is composed of 14 different subunits. Subunits NuoA, H, J, K, L, M, N constitute the membrane sector of the complex.

Its subcellular location is the cell inner membrane. It catalyses the reaction a quinone + NADH + 5 H(+)(in) = a quinol + NAD(+) + 4 H(+)(out). NDH-1 shuttles electrons from NADH, via FMN and iron-sulfur (Fe-S) centers, to quinones in the respiratory chain. The immediate electron acceptor for the enzyme in this species is believed to be ubiquinone. Couples the redox reaction to proton translocation (for every two electrons transferred, four hydrogen ions are translocated across the cytoplasmic membrane), and thus conserves the redox energy in a proton gradient. This subunit may bind ubiquinone. This is NADH-quinone oxidoreductase subunit H from Polaromonas sp. (strain JS666 / ATCC BAA-500).